The following is a 298-amino-acid chain: GTPase Era (298 aa).

One can recognise an Era-type G domain in the interval 8-176 (RSGSVAVIGR…VSDLLKLVPE (169 aa)). The G1 stretch occupies residues 16–23 (GRPNVGKS). Residue 16-23 (GRPNVGKS) coordinates GTP. The G2 stretch occupies residues 42–46 (QTTRH). The tract at residues 63 to 66 (DTPG) is G3. GTP contacts are provided by residues 63-67 (DTPGL) and 125-128 (NKVD). Residues 125 to 128 (NKVD) are G4. The G5 stretch occupies residues 155-157 (VSA). One can recognise a KH type-2 domain in the interval 199-283 (VREQLMRQLG…FLETWVRVRE (85 aa)).

This sequence belongs to the TRAFAC class TrmE-Era-EngA-EngB-Septin-like GTPase superfamily. Era GTPase family. Monomer.

The protein resides in the cytoplasm. The protein localises to the cell inner membrane. In terms of biological role, an essential GTPase that binds both GDP and GTP, with rapid nucleotide exchange. Plays a role in 16S rRNA processing and 30S ribosomal subunit biogenesis and possibly also in cell cycle regulation and energy metabolism. The sequence is that of GTPase Era from Xanthomonas campestris pv. campestris (strain 8004).